The sequence spans 150 residues: Ribosome maturation factor RimP (150 aa).

Belongs to the RimP family.

Its subcellular location is the cytoplasm. Its function is as follows. Required for maturation of 30S ribosomal subunits. The protein is Ribosome maturation factor RimP of Francisella tularensis subsp. mediasiatica (strain FSC147).